The sequence spans 461 residues: MLKKEINVVILAAGKGTRMQSSYPKVLHKLGGKTILEHVINIAKSVKPKKIILVYNNKEKEIKSKISDTSIDWVIQKEQKGTGDAILKASKKFSDKDDIVVLYGDMPYISIESIKKLFTSKKQSDISLLTAYVKNPDGYGRVFKKNGKVIKIIEEQDANFHEKKIKEVYSGTFIANGKDLKRWLNQINNKNIKKEFYATDIVHFANLENSTIKTVQVLNCKEILGVNNKLQLSILEKIFRKKQVNDLLLSGVTLKDPNHFILRGILKHGKNIEIDTGVILEGNIILGNNIKIGVGSVIKNSFIDDQTEIKEYTIIENVKIGKKCIIGPFAHLRPKTVLDDQIHVGNFVEIKDSIIKKESKIKHLSYFGNSEIGSQVNIGAGSITCNYDGVNKFKTIIGDNVLIGANTKLIAPIKITKNATIAAGTTLTQDVNTPCLIYNNKEQKQKKNWKRPQKIIKKTDQ.

Residues 1 to 229 are pyrophosphorylase; the sequence is MLKKEINVVI…CKEILGVNNK (229 aa). Residues 11 to 14, Lys25, Gln76, 81 to 82, 103 to 105, Gly140, Glu154, and Asn227 each bind UDP-N-acetyl-alpha-D-glucosamine; these read LAAG, GT, and YGD. Asp105 is a Mg(2+) binding site. Mg(2+) is bound at residue Asn227. A linker region spans residues 230-250; sequence LQLSILEKIFRKKQVNDLLLS. Residues 251 to 461 are N-acetyltransferase; it reads GVTLKDPNHF…PQKIIKKTDQ (211 aa). Residues Arg333 and Lys351 each contribute to the UDP-N-acetyl-alpha-D-glucosamine site. His363 acts as the Proton acceptor in catalysis. 2 residues coordinate UDP-N-acetyl-alpha-D-glucosamine: Tyr366 and Asn377. Residues Ala380, 386–387, and Ala423 each bind acetyl-CoA; that span reads NY.

It in the N-terminal section; belongs to the N-acetylglucosamine-1-phosphate uridyltransferase family. The protein in the C-terminal section; belongs to the transferase hexapeptide repeat family. As to quaternary structure, homotrimer. Mg(2+) serves as cofactor.

The protein localises to the cytoplasm. The catalysed reaction is alpha-D-glucosamine 1-phosphate + acetyl-CoA = N-acetyl-alpha-D-glucosamine 1-phosphate + CoA + H(+). The enzyme catalyses N-acetyl-alpha-D-glucosamine 1-phosphate + UTP + H(+) = UDP-N-acetyl-alpha-D-glucosamine + diphosphate. The protein operates within nucleotide-sugar biosynthesis; UDP-N-acetyl-alpha-D-glucosamine biosynthesis; N-acetyl-alpha-D-glucosamine 1-phosphate from alpha-D-glucosamine 6-phosphate (route II): step 2/2. It participates in nucleotide-sugar biosynthesis; UDP-N-acetyl-alpha-D-glucosamine biosynthesis; UDP-N-acetyl-alpha-D-glucosamine from N-acetyl-alpha-D-glucosamine 1-phosphate: step 1/1. It functions in the pathway bacterial outer membrane biogenesis; LPS lipid A biosynthesis. Its function is as follows. Catalyzes the last two sequential reactions in the de novo biosynthetic pathway for UDP-N-acetylglucosamine (UDP-GlcNAc). The C-terminal domain catalyzes the transfer of acetyl group from acetyl coenzyme A to glucosamine-1-phosphate (GlcN-1-P) to produce N-acetylglucosamine-1-phosphate (GlcNAc-1-P), which is converted into UDP-GlcNAc by the transfer of uridine 5-monophosphate (from uridine 5-triphosphate), a reaction catalyzed by the N-terminal domain. This is Bifunctional protein GlmU from Buchnera aphidicola subsp. Schizaphis graminum (strain Sg).